A 669-amino-acid polypeptide reads, in one-letter code: PAN2-PAN3 deadenylation complex subunit PAN3 (669 aa).

The span at 1-10 (MATTFGSPSG) shows a compositional bias: polar residues. Residues 1–25 (MATTFGSPSGDSRRGVASPRPKGRE) are disordered. The C3H1-type zinc finger occupies 25–54 (EAKNTFCRNVTIYGHCRYENSKCRPPHLPD). Residues 247 to 519 (QVMPNSTLPV…DIDNFLGGIS (273 aa)) form a pseudokinase domain region. Residues Arg298, 347–354 (DYHPNSKS), and 408–409 (SK) each bind ATP. Residues 520-558 (DQLASVFDSELHAQDTLTNTLGRELESSRIVRLLVKLNM) adopt a coiled-coil conformation. The interval 559–669 (VNERPELDAS…LIRAGRGQGK (111 aa)) is knob domain.

This sequence belongs to the protein kinase superfamily. PAN3 family. Homodimer. Forms a heterotrimer with a catalytic subunit PAN2 to form the poly(A)-nuclease (PAN) deadenylation complex. Interacts (via PAM-2 motif) with poly(A)-binding protein PAB1 (via PABC domain), conferring substrate specificity of the enzyme complex.

The protein resides in the cytoplasm. Functionally, regulatory subunit of the poly(A)-nuclease (PAN) deadenylation complex, one of two cytoplasmic mRNA deadenylases involved in mRNA turnover. PAN specifically shortens poly(A) tails of RNA and the activity is stimulated by poly(A)-binding protein PAB1. PAN deadenylation is followed by rapid degradation of the shortened mRNA tails by the CCR4-NOT complex. Deadenylated mRNAs are then degraded by two alternative mechanisms, namely exosome-mediated 3'-5' exonucleolytic degradation, or deadenylation-dependent mRNA decaping and subsequent 5'-3' exonucleolytic degradation by XRN1. May also be involved in post-transcriptional maturation of mRNA poly(A) tails. PAN3 acts as a positive regulator for PAN activity, recruiting the catalytic subunit PAN2 to mRNA via its interaction with RNA and with PAB1. The chain is PAN2-PAN3 deadenylation complex subunit PAN3 from Phaeosphaeria nodorum (strain SN15 / ATCC MYA-4574 / FGSC 10173) (Glume blotch fungus).